A 323-amino-acid polypeptide reads, in one-letter code: Olfactory receptor 2T35 (323 aa).

Topologically, residues 1-26 are extracellular; the sequence is MGMEGLLQNSTNFVLTGLITHPAFPG. N-linked (GlcNAc...) asparagine glycosylation is present at Asn9. A helical membrane pass occupies residues 27–50; the sequence is LLFAVVFSIFVVAITANLVMILLI. Over 51-58 the chain is Cytoplasmic; it reads HMDSRLHT. The helical transmembrane segment at 59-80 threads the bilayer; the sequence is PMYFLLSQLSIMDTIYICITVP. Topologically, residues 81–101 are extracellular; it reads KMLQDLLSKDKTISFLGCAVQ. A disulfide bridge connects residues Cys98 and Cys189. The chain crosses the membrane as a helical span at residues 102–120; the sequence is IFYLTLIGGEFFLLGLMAY. The Cytoplasmic segment spans residues 121–139; the sequence is DRYVAVCNPLRYPLLMNRR. Residues 140–158 form a helical membrane-spanning segment; the sequence is VCLFMVVGSWVGGSLDGFM. At 159 to 195 the chain is on the extracellular side; sequence LTPVTMSFPFCRSREINHFFCEIPAVLKLSCTDTSLY. The helical transmembrane segment at 196 to 219 threads the bilayer; the sequence is ETLMYACCVLMLLIPLSVISVSYT. Residues 220 to 236 lie on the Cytoplasmic side of the membrane; it reads HILLTVHRMNSAEGRRK. Residues 237–259 form a helical membrane-spanning segment; that stretch reads AFATCSSHIMVVSVFYGAAFYTN. Over 260–272 the chain is Extracellular; it reads VLPHSYHTPEKDK. A helical transmembrane segment spans residues 273 to 292; the sequence is VVSAFYTILTPMLNPLIYSL. The Cytoplasmic portion of the chain corresponds to 293–323; the sequence is RNKDVAAALRKVLGRCGSSQSIRVATVIRKG.

It belongs to the G-protein coupled receptor 1 family.

The protein localises to the cell membrane. Odorant receptor. The chain is Olfactory receptor 2T35 (OR2T35) from Homo sapiens (Human).